The chain runs to 92 residues: Kinetoplastid membrane protein 11C (92 aa).

The protein belongs to the KMP-11 family. Monomer.

Its subcellular location is the cytoplasm. It is found in the cytoskeleton. The protein localises to the cell projection. It localises to the cilium. The protein resides in the flagellum. May be involved in the regulation of the cytoskeleton through interaction with the subpellicular microtubules. May be involved in parasite mobility and attachment to the surface of the host cell. Behaves as a strong immunogen during infection. This chain is Kinetoplastid membrane protein 11C (KMP-11C), found in Leishmania infantum.